The chain runs to 243 residues: Carboxy-S-adenosyl-L-methionine synthase (243 aa).

S-adenosyl-L-methionine contacts are provided by residues Tyr-35, 68–70 (GCS), 92–93 (DN), and Arg-199.

The protein belongs to the class I-like SAM-binding methyltransferase superfamily. Cx-SAM synthase family. Homodimer.

The enzyme catalyses prephenate + S-adenosyl-L-methionine = carboxy-S-adenosyl-L-methionine + 3-phenylpyruvate + H2O. Functionally, catalyzes the conversion of S-adenosyl-L-methionine (SAM) to carboxy-S-adenosyl-L-methionine (Cx-SAM). The sequence is that of Carboxy-S-adenosyl-L-methionine synthase from Helicobacter pylori (strain J99 / ATCC 700824) (Campylobacter pylori J99).